A 101-amino-acid chain; its full sequence is NAD(P)H-quinone oxidoreductase subunit 4L, chloroplastic (101 aa).

3 helical membrane-spanning segments follow: residues Met-2–Ile-22, Met-32–Phe-52, and Ile-61–Val-81.

It belongs to the complex I subunit 4L family. NDH is composed of at least 16 different subunits, 5 of which are encoded in the nucleus.

The protein localises to the plastid. It localises to the chloroplast thylakoid membrane. It catalyses the reaction a plastoquinone + NADH + (n+1) H(+)(in) = a plastoquinol + NAD(+) + n H(+)(out). The catalysed reaction is a plastoquinone + NADPH + (n+1) H(+)(in) = a plastoquinol + NADP(+) + n H(+)(out). Its function is as follows. NDH shuttles electrons from NAD(P)H:plastoquinone, via FMN and iron-sulfur (Fe-S) centers, to quinones in the photosynthetic chain and possibly in a chloroplast respiratory chain. The immediate electron acceptor for the enzyme in this species is believed to be plastoquinone. Couples the redox reaction to proton translocation, and thus conserves the redox energy in a proton gradient. In Nymphaea alba (White water-lily), this protein is NAD(P)H-quinone oxidoreductase subunit 4L, chloroplastic.